Consider the following 86-residue polypeptide: Large ribosomal subunit protein bL27 (86 aa).

This sequence belongs to the bacterial ribosomal protein bL27 family.

The polypeptide is Large ribosomal subunit protein bL27 (Xanthomonas axonopodis pv. citri (strain 306)).